A 467-amino-acid polypeptide reads, in one-letter code: UPF0236 protein TTE0033/TTE0744/TTE0838/TTE0852/TTE1082/TTE1247/TTE1519/TTE1678/TTE1739/TTE1823/TTE2212 (467 aa).

This sequence belongs to the UPF0236 family.

This is UPF0236 protein TTE0033/TTE0744/TTE0838/TTE0852/TTE1082/TTE1247/TTE1519/TTE1678/TTE1739/TTE1823/TTE2212 from Caldanaerobacter subterraneus subsp. tengcongensis (strain DSM 15242 / JCM 11007 / NBRC 100824 / MB4) (Thermoanaerobacter tengcongensis).